The following is a 422-amino-acid chain: NADH-quinone oxidoreductase subunit D 1 (422 aa).

The protein belongs to the complex I 49 kDa subunit family. As to quaternary structure, NDH-1 is composed of 14 different subunits. Subunits NuoB, C, D, E, F, and G constitute the peripheral sector of the complex.

It is found in the cell membrane. The catalysed reaction is a quinone + NADH + 5 H(+)(in) = a quinol + NAD(+) + 4 H(+)(out). NDH-1 shuttles electrons from NADH, via FMN and iron-sulfur (Fe-S) centers, to quinones in the respiratory chain. The immediate electron acceptor for the enzyme in this species is believed to be ubiquinone. Couples the redox reaction to proton translocation (for every two electrons transferred, four hydrogen ions are translocated across the cytoplasmic membrane), and thus conserves the redox energy in a proton gradient. The polypeptide is NADH-quinone oxidoreductase subunit D 1 (Herpetosiphon aurantiacus (strain ATCC 23779 / DSM 785 / 114-95)).